The chain runs to 199 residues: uncharacterized protein (199 aa).

4 helical membrane-spanning segments follow: residues 40 to 60 (LLIC…FCFL), 86 to 106 (VLTG…TFPF), 117 to 137 (TSWP…LTSS), and 166 to 186 (FLLA…ALIL).

The protein resides in the membrane. This is an uncharacterized protein from Saccharomyces cerevisiae (strain ATCC 204508 / S288c) (Baker's yeast).